The chain runs to 597 residues: Serine/arginine repetitive matrix protein 3 (597 aa).

Residues methionine 1 to threonine 31 show a composition bias toward polar residues. The segment at methionine 1–valine 47 is disordered. Residues leucine 55–lysine 98 form the CWF21 domain. The segment covering glutamate 99–glycine 109 has biased composition (basic and acidic residues). Residues glutamate 99–alanine 597 are disordered. 4 stretches are compositionally biased toward basic residues: residues arginine 149–histidine 158, proline 168–arginine 186, leucine 199–arginine 211, and arginine 219–proline 243. Composition is skewed to low complexity over residues serine 257 to leucine 278 and serine 291 to arginine 313. Gly residues-rich tracts occupy residues glycine 315–proline 328 and glycine 374–alanine 383. Positions glycine 384–arginine 412 are enriched in basic residues. Composition is skewed to low complexity over residues arginine 417–glycine 433, arginine 466–alanine 476, and serine 488–lysine 507. A compositionally biased stretch (basic and acidic residues) spans leucine 530–arginine 549. Positions alanine 550–arginine 565 are enriched in basic residues.

The protein belongs to the CWC21 family. As to expression, expressed in breast cancer cell lines.

May play a role in regulating breast cancer cell invasiveness. May be involved in RYBP-mediated breast cancer progression. This Homo sapiens (Human) protein is Serine/arginine repetitive matrix protein 3 (SRRM3).